The following is a 96-amino-acid chain: UPF0235 protein VP2619 (96 aa).

This sequence belongs to the UPF0235 family.

This Vibrio parahaemolyticus serotype O3:K6 (strain RIMD 2210633) protein is UPF0235 protein VP2619.